The following is a 67-amino-acid chain: Large ribosomal subunit protein bL35 (67 aa).

The segment covering 1–16 (MPKMKTKSSAKKRFRV) has biased composition (basic residues). Positions 1–24 (MPKMKTKSSAKKRFRVRPGGTVKR) are disordered.

The protein belongs to the bacterial ribosomal protein bL35 family.

In Delftia acidovorans (strain DSM 14801 / SPH-1), this protein is Large ribosomal subunit protein bL35.